The following is a 266-amino-acid chain: Hydroxyethylthiazole kinase (266 aa).

Methionine 43 is a substrate binding site. Arginine 119 and threonine 166 together coordinate ATP. Glycine 193 provides a ligand contact to substrate.

The protein belongs to the Thz kinase family. Mg(2+) serves as cofactor.

It catalyses the reaction 5-(2-hydroxyethyl)-4-methylthiazole + ATP = 4-methyl-5-(2-phosphooxyethyl)-thiazole + ADP + H(+). It participates in cofactor biosynthesis; thiamine diphosphate biosynthesis; 4-methyl-5-(2-phosphoethyl)-thiazole from 5-(2-hydroxyethyl)-4-methylthiazole: step 1/1. Functionally, catalyzes the phosphorylation of the hydroxyl group of 4-methyl-5-beta-hydroxyethylthiazole (THZ). The sequence is that of Hydroxyethylthiazole kinase from Methanococcus maripaludis (strain C7 / ATCC BAA-1331).